The chain runs to 144 residues: Large ribosomal subunit protein uL15 (144 aa).

Positions 1-51 are disordered; sequence MELNSIKPGSGSKHAKRRVGRGIGSGLGKTAGRGHKGQKSRAGGYHKVGFE. Residues 21-31 are compositionally biased toward gly residues; it reads RGIGSGLGKTA.

It belongs to the universal ribosomal protein uL15 family. As to quaternary structure, part of the 50S ribosomal subunit.

Binds to the 23S rRNA. This is Large ribosomal subunit protein uL15 from Leptothrix cholodnii (strain ATCC 51168 / LMG 8142 / SP-6) (Leptothrix discophora (strain SP-6)).